A 699-amino-acid chain; its full sequence is Kinesin-like protein KIF3A (699 aa).

The region spanning 14-345 (NVKVVVRCRP…LRYANRAKNI (332 aa)) is the Kinesin motor domain. 100 to 107 (GQTGTGKT) provides a ligand contact to ATP. A coiled-coil region spans residues 355 to 590 (PKDALLRQFQ…LSRELRLQML (236 aa)). Disordered stretches follow at residues 372 to 421 (KKLE…KMIE) and 663 to 699 (SLMK…SLLQ). A compositionally biased stretch (acidic residues) spans 376 to 400 (EGEEISGSDISGSEEDDDEEGEVGE). Positions 672–687 (TSKGKARPKTGRRKRS) are enriched in basic residues. The residue at position 687 (serine 687) is a Phosphoserine. The globular stretch occupies residues 697-699 (LLQ).

Belongs to the TRAFAC class myosin-kinesin ATPase superfamily. Kinesin family. Kinesin II subfamily. Heterodimer of KIF3A and KIF3B. Interacts with CIMAP3. Interacts with CLN3. Interacts with DCTN1. Interacts with FLCN. Interacts with AP3B1.

The protein resides in the cytoplasm. The protein localises to the cytoskeleton. It is found in the cell projection. Its subcellular location is the cilium. It localises to the microtubule organizing center. The protein resides in the centrosome. The protein localises to the centriole. Microtubule-based anterograde translocator for membranous organelles. Plus end-directed microtubule sliding activity in vitro. Plays a role in primary cilia formation. Plays a role in centriole cohesion and subdistal appendage organization and function. Regulates the formation of the subdistal appendage via recruitment of DCTN1 to the centriole. Also required for ciliary basal feet formation and microtubule anchoring to mother centriole. This chain is Kinesin-like protein KIF3A (KIF3A), found in Homo sapiens (Human).